Here is a 155-residue protein sequence, read N- to C-terminus: uncharacterized protein (155 aa).

Disordered regions lie at residues 24–63 (RVGY…VVLK) and 80–155 (KAAK…DENE). At Ser50 the chain carries Phosphoserine. Lys108 bears the N6-acetyllysine mark. The span at 128-147 (KQSSVRKNSQKQIKNSSLLS) shows a compositional bias: polar residues. Ser130, Ser147, and Ser150 each carry phosphoserine.

This is an uncharacterized protein from Mus musculus (Mouse).